A 101-amino-acid chain; its full sequence is MDKSKRPFRKSKRSFRRRLPPIGSGDRIDYRNMSLISRFISEQGKILSRRVNRLTLKQQRLITIAIKQARILSSLPFLNNEKQFERTESTPRTAGPKTRNK.

Over residues 1–19 the composition is skewed to basic residues; it reads MDKSKRPFRKSKRSFRRRL. 2 disordered regions span residues 1–23 and 82–101; these read MDKSKRPFRKSKRSFRRRLPPIG and KQFERTESTPRTAGPKTRNK.

This sequence belongs to the bacterial ribosomal protein bS18 family. In terms of assembly, part of the 30S ribosomal subunit.

It localises to the plastid. Its subcellular location is the chloroplast. The chain is Small ribosomal subunit protein bS18c from Drimys granadensis.